Reading from the N-terminus, the 891-residue chain is Protein translocase subunit SecA (891 aa).

ATP contacts are provided by residues Gln-83, 101–105, and Asp-489; that span reads GEGKT.

Belongs to the SecA family.

It localises to the plastid. The protein resides in the chloroplast stroma. It is found in the chloroplast thylakoid membrane. The catalysed reaction is ATP + H2O + cellular proteinSide 1 = ADP + phosphate + cellular proteinSide 2.. Functionally, has a central role in coupling the hydrolysis of ATP to the transfer of proteins across the thylakoid membrane. This chain is Protein translocase subunit SecA, found in Diacronema lutheri (Unicellular marine alga).